A 95-amino-acid chain; its full sequence is Integration host factor subunit alpha (95 aa).

Residues 51-71 are disordered; that stretch reads NFDLRDKNERPGRNPKTGEDI. Residues 53-69 are compositionally biased toward basic and acidic residues; that stretch reads DLRDKNERPGRNPKTGE.

This sequence belongs to the bacterial histone-like protein family. As to quaternary structure, heterodimer of an alpha and a beta chain.

Functionally, this protein is one of the two subunits of integration host factor, a specific DNA-binding protein that functions in genetic recombination as well as in transcriptional and translational control. The polypeptide is Integration host factor subunit alpha (Vibrio vulnificus (strain CMCP6)).